The primary structure comprises 385 residues: Deoxyguanosinetriphosphate triphosphohydrolase-like protein (385 aa).

The region spanning 75 to 204 (RLTHSLEVAQ…INFADEIAYN (130 aa)) is the HD domain.

It belongs to the dGTPase family. Type 2 subfamily.

This chain is Deoxyguanosinetriphosphate triphosphohydrolase-like protein, found in Geobacter sulfurreducens (strain ATCC 51573 / DSM 12127 / PCA).